We begin with the raw amino-acid sequence, 252 residues long: Ubiquinone/menaquinone biosynthesis C-methyltransferase UbiE (252 aa).

Residues threonine 71, aspartate 100, 124–125, and serine 141 contribute to the S-adenosyl-L-methionine site; that span reads DA.

The protein belongs to the class I-like SAM-binding methyltransferase superfamily. MenG/UbiE family.

It carries out the reaction a 2-demethylmenaquinol + S-adenosyl-L-methionine = a menaquinol + S-adenosyl-L-homocysteine + H(+). The enzyme catalyses a 2-methoxy-6-(all-trans-polyprenyl)benzene-1,4-diol + S-adenosyl-L-methionine = a 5-methoxy-2-methyl-3-(all-trans-polyprenyl)benzene-1,4-diol + S-adenosyl-L-homocysteine + H(+). The protein operates within quinol/quinone metabolism; menaquinone biosynthesis; menaquinol from 1,4-dihydroxy-2-naphthoate: step 2/2. It participates in cofactor biosynthesis; ubiquinone biosynthesis. In terms of biological role, methyltransferase required for the conversion of demethylmenaquinol (DMKH2) to menaquinol (MKH2) and the conversion of 2-polyprenyl-6-methoxy-1,4-benzoquinol (DDMQH2) to 2-polyprenyl-3-methyl-6-methoxy-1,4-benzoquinol (DMQH2). In Caulobacter vibrioides (strain ATCC 19089 / CIP 103742 / CB 15) (Caulobacter crescentus), this protein is Ubiquinone/menaquinone biosynthesis C-methyltransferase UbiE.